The following is a 446-amino-acid chain: D(1A) dopamine receptor (446 aa).

Topologically, residues 1-22 are extracellular; the sequence is MPLNDTTMDRRGLVVERDFSFR. An N-linked (GlcNAc...) asparagine glycan is attached at Asn4. A helical transmembrane segment spans residues 23–48; it reads ILTACFLSLLILSTLLGNTLVCAAVI. The Cytoplasmic portion of the chain corresponds to 49–59; sequence RFRHLRSKVTN. A helical transmembrane segment spans residues 60 to 86; the sequence is FFVISLAVSDLLVAVLVMPWKAVAEIA. Residues 87 to 95 lie on the Extracellular side of the membrane; that stretch reads GFWPFGSFC. A disulfide bridge connects residues Cys95 and Cys185. The helical transmembrane segment at 96–118 threads the bilayer; the sequence is NIWVAFDIMCSTASILNLCVISV. Over 119–137 the chain is Cytoplasmic; it reads DRYWAISSPFRYERKMTPK. The chain crosses the membrane as a helical span at residues 138 to 162; it reads AAFILISVAWTLSVLISFIPVQLNW. Residues 163–191 are Extracellular-facing; it reads HKARPLSSPDGNVSSQDETMDNCDSSLSR. A helical transmembrane segment spans residues 192 to 217; it reads TYAISSSLISFYIPVAIMIVTYTRIY. Over 218 to 271 the chain is Cytoplasmic; the sequence is RIAQKQIRRISALERAAVHAKNCQNTTGNGANVECSQPESSFKMSFKRETKVLK. A helical membrane pass occupies residues 272–298; that stretch reads TLSVIMGVFVCCWLPFFILNCMVPFCE. Topologically, residues 299–315 are extracellular; that stretch reads SDLPSGETKPFCIDSIT. A helical membrane pass occupies residues 316-340; that stretch reads FDVFVWFGWANSSLNPIIYAFNADF. Residues 341 to 446 lie on the Cytoplasmic side of the membrane; it reads RKAFSTLLGC…PITQNGQHKT (106 aa). Residues Cys350 and Cys354 are each lipidated (S-palmitoyl cysteine).

Belongs to the G-protein coupled receptor 1 family. As to quaternary structure, interacts with DNAJC14 via its C-terminus.

The protein localises to the cell membrane. Its subcellular location is the endoplasmic reticulum membrane. It localises to the cell projection. It is found in the cilium membrane. The protein resides in the dendrite. The protein localises to the dendritic spine. Its function is as follows. This is one of the five types (D1 to D5) of receptors for dopamine. The activity of this receptor is mediated by G proteins which activate adenylyl cyclase. The chain is D(1A) dopamine receptor (DRD1) from Didelphis virginiana (North American opossum).